A 312-amino-acid polypeptide reads, in one-letter code: Glyoxylate/hydroxypyruvate reductase A (312 aa).

R227 is a catalytic residue. The active-site Proton donor is H275.

It belongs to the D-isomer specific 2-hydroxyacid dehydrogenase family. GhrA subfamily.

Its subcellular location is the cytoplasm. The enzyme catalyses glycolate + NADP(+) = glyoxylate + NADPH + H(+). The catalysed reaction is (R)-glycerate + NAD(+) = 3-hydroxypyruvate + NADH + H(+). It carries out the reaction (R)-glycerate + NADP(+) = 3-hydroxypyruvate + NADPH + H(+). In terms of biological role, catalyzes the NADPH-dependent reduction of glyoxylate and hydroxypyruvate into glycolate and glycerate, respectively. This Escherichia coli (strain ATCC 8739 / DSM 1576 / NBRC 3972 / NCIMB 8545 / WDCM 00012 / Crooks) protein is Glyoxylate/hydroxypyruvate reductase A.